The chain runs to 253 residues: Triosephosphate isomerase, cytosolic (253 aa).

Substrate-binding residues include N10 and K12. The Electrophile role is filled by H96. E166 serves as the catalytic Proton acceptor.

This sequence belongs to the triosephosphate isomerase family. In terms of assembly, homodimer.

Its subcellular location is the cytoplasm. The catalysed reaction is D-glyceraldehyde 3-phosphate = dihydroxyacetone phosphate. The protein operates within carbohydrate biosynthesis; gluconeogenesis. Its pathway is carbohydrate degradation; glycolysis; D-glyceraldehyde 3-phosphate from glycerone phosphate: step 1/1. The sequence is that of Triosephosphate isomerase, cytosolic from Coptis japonica (Japanese goldthread).